The chain runs to 843 residues: Protein P (843 aa).

The tract at residues methionine 1–glutamine 177 is terminal protein domain (TP). The segment at glutamate 178–leucine 346 is spacer. 2 disordered regions span residues leucine 218–isoleucine 243 and serine 290–serine 316. The segment covering serine 290–glycine 299 has biased composition (polar residues). Residues glutamate 347–glutamine 690 are polymerase/reverse transcriptase domain (RT). Residues glutamate 357 to isoleucine 600 enclose the Reverse transcriptase domain. Residues aspartate 429, aspartate 551, and aspartate 552 each contribute to the Mg(2+) site.

This sequence belongs to the hepadnaviridae P protein family.

The enzyme catalyses DNA(n) + a 2'-deoxyribonucleoside 5'-triphosphate = DNA(n+1) + diphosphate. The catalysed reaction is Endonucleolytic cleavage to 5'-phosphomonoester.. Its activity is regulated as follows. Activated by host HSP70 and HSP40 in vitro to be able to bind the epsilon loop of the pgRNA. Because deletion of the RNase H region renders the protein partly chaperone-independent, the chaperones may be needed indirectly to relieve occlusion of the RNA-binding site by this domain. Inhibited by several reverse-transcriptase inhibitors: Lamivudine, Adefovir and Entecavir. Functionally, multifunctional enzyme that converts the viral RNA genome into dsDNA in viral cytoplasmic capsids. This enzyme displays a DNA polymerase activity that can copy either DNA or RNA templates, and a ribonuclease H (RNase H) activity that cleaves the RNA strand of RNA-DNA heteroduplexes in a partially processive 3'- to 5'-endonucleasic mode. Neo-synthesized pregenomic RNA (pgRNA) are encapsidated together with the P protein, and reverse-transcribed inside the nucleocapsid. Initiation of reverse-transcription occurs first by binding the epsilon loop on the pgRNA genome, and is initiated by protein priming, thereby the 5'-end of (-)DNA is covalently linked to P protein. Partial (+)DNA is synthesized from the (-)DNA template and generates the relaxed circular DNA (RC-DNA) genome. After budding and infection, the RC-DNA migrates in the nucleus, and is converted into a plasmid-like covalently closed circular DNA (cccDNA). The activity of P protein does not seem to be necessary for cccDNA generation, and is presumably released from (+)DNA by host nuclear DNA repair machinery. This Homo sapiens (Human) protein is Protein P.